The chain runs to 331 residues: Cytosolic sulfotransferase 8 (331 aa).

Basic and acidic residues predominate over residues 1–11; the sequence is MGEKDIPRNLK. The segment at 1–31 is disordered; it reads MGEKDIPRNLKEEEEEEEENQSEETKSLISS. Residues 12 to 22 show a composition bias toward acidic residues; it reads EEEEEEEENQS. Residue 80-85 participates in 3'-phosphoadenylyl sulfate binding; that stretch reads KSGTTW. H145 functions as the Proton acceptor in the catalytic mechanism. Residues R167, S175, Y231, and 297 to 299 each bind 3'-phosphoadenylyl sulfate; that span reads RKG.

Belongs to the sulfotransferase 1 family. In terms of tissue distribution, expressed in seedlings and roots.

The protein localises to the cytoplasm. In terms of biological role, sulfotransferase that utilizes 3'-phospho-5'-adenylyl sulfate (PAPS) as sulfonate donor. No activity with brassinosteroids. The chain is Cytosolic sulfotransferase 8 (SOT8) from Arabidopsis thaliana (Mouse-ear cress).